Reading from the N-terminus, the 213-residue chain is Thiamine import ATP-binding protein ThiQ (213 aa).

Residues 1 to 212 (MIELNVTFDY…EQGRIVADQL (212 aa)) form the ABC transporter domain. 31-38 (GESGAGKS) lines the ATP pocket.

This sequence belongs to the ABC transporter superfamily. Thiamine importer (TC 3.A.1.19.1) family. As to quaternary structure, the complex is composed of two ATP-binding proteins (ThiQ), two transmembrane proteins (ThiP) and a solute-binding protein (ThiB).

It localises to the cell inner membrane. It catalyses the reaction thiamine(out) + ATP + H2O = thiamine(in) + ADP + phosphate + H(+). In terms of biological role, part of the ABC transporter complex ThiBPQ involved in thiamine import. Responsible for energy coupling to the transport system. This Haemophilus ducreyi (strain 35000HP / ATCC 700724) protein is Thiamine import ATP-binding protein ThiQ.